The primary structure comprises 505 residues: Cyclic AMP-dependent transcription factor ATF-2 (505 aa).

The Nuclear export signal 1 (N-NES) signature appears at 1–7 (MKFKLHV). The C2H2-type zinc finger occupies 25–49 (FLCTAPGCGQRFTNEDHLAVHKHKH). A Phosphothreonine; by PKC/PRKCH modification is found at Thr-52. Residue Ser-62 is modified to Phosphoserine; by VRK1. Thr-69 carries the post-translational modification Phosphothreonine; by MAPK11 and MAPK14. Phosphothreonine; by MAPK1, MAPK3, MAPK11, MAPK12, MAPK14 and PLK3 is present on Thr-71. Thr-73 carries the post-translational modification Phosphothreonine; by VRK1. Phosphoserine occurs at positions 90 and 112. Thr-116 is modified (phosphothreonine). A Phosphoserine; by PKC/PRKCA and PKC/PRKCB modification is found at Ser-121. Disordered stretches follow at residues 125 to 155 (EPSV…PLAQ) and 259 to 373 (PGIP…RQKR). Ser-136 bears the Phosphoserine mark. Residues 282–293 (LTQQHPPVTNGD) are compositionally biased toward polar residues. The essential for its histone acetyltransferase activity stretch occupies residues 296-299 (KGHG). Positions 318–334 (PATSTTETPASPAHTTP) are enriched in low complexity. At Ser-328 the chain carries Phosphoserine. Phosphoserine; by PKC/PRKCA and PKC/PRKCB is present on Ser-340. Positions 346 to 363 (AANEDPDEKRRKFLERNR) are enriched in basic and acidic residues. The bZIP domain occupies 352–415 (DEKRRKFLER…AQLKQLLLAH (64 aa)). Residues 354–374 (KRRKFLERNRAAASRCRQKRK) form a basic motif region. Lys-357 carries the N6-acetyllysine modification. Ser-367 is subject to Phosphoserine; by PKC/PRKCA and PKC/PRKCB. Lys-374 carries the post-translational modification N6-acetyllysine. Residues 380 to 408 (LEKKAEDLSSLNGQLQSEVTLLRNEVAQL) are leucine-zipper. Residues 405-414 (VAQLKQLLLA) carry the Nuclear export signal 2 (C-NES) motif. The segment at 425–472 (KKSGYHTADKDDSSEDISVPSSPHTEAIQHSSVSTSNGVSSTSKAEAV) is disordered. Residues Ser-442 and Ser-446 each carry the phosphoserine modification. Over residues 443-454 (VPSSPHTEAIQH) the composition is skewed to polar residues. Over residues 455–467 (SSVSTSNGVSSTS) the composition is skewed to low complexity. Phosphoserine; by ATM occurs at positions 490 and 498.

The protein belongs to the bZIP family. ATF subfamily. Binds DNA as a dimer and can form a homodimer in the absence of DNA. Can form a heterodimer with JUN. Heterodimerization is essential for its transcriptional activity. Interacts with SMAD3 and SMAD4. Binds through its N-terminal region to UTF1 which acts as a coactivator of ATF2 transcriptional activity. Interacts with the HK1/VDAC1 complex. Interacts with NBN, MRE11, XPO1, KAT5 and CUL3. Phosphorylation of Thr-69 by MAPK14 and MAPK11, and at Thr-71 by MAPK1/ERK2, MAPK3/ERK1, MAPK11, MAPK12 and MAPK14 in response to external stimulus like insulin causes increased transcriptional activity. Phosphorylated by PLK3 following hyperosmotic stress. Also phosphorylated and activated by JNK and CaMK4. ATM-mediated phosphorylation at Ser-490 and Ser-498 stimulates its function in DNA damage response. Phosphorylation at Ser-62, Thr-73 and Ser-121 activates its transcriptional activity. Phosphorylation at Thr-69 or Thr-71 enhances acetylation of histones H2B and H4. As to expression, ubiquitously expressed, with more abundant expression in the brain.

The protein localises to the nucleus. Its subcellular location is the cytoplasm. It is found in the mitochondrion outer membrane. Transcriptional activator which regulates the transcription of various genes, including those involved in anti-apoptosis, cell growth, and DNA damage response. Dependent on its binding partner, binds to CRE (cAMP response element) consensus sequences (5'-TGACGTCA-3') or to AP-1 (activator protein 1) consensus sequences (5'-TGACTCA-3'). In the nucleus, contributes to global transcription and the DNA damage response, in addition to specific transcriptional activities that are related to cell development, proliferation and death. In the cytoplasm, interacts with and perturbs HK1- and VDAC1-containing complexes at the mitochondrial outer membrane, thereby impairing mitochondrial membrane potential, inducing mitochondrial leakage and promoting cell death. The phosphorylated form (mediated by ATM) plays a role in the DNA damage response and is involved in the ionizing radiation (IR)-induced S phase checkpoint control and in the recruitment of the MRN complex into the IR-induced foci (IRIF). Exhibits histone acetyltransferase (HAT) activity which specifically acetylates histones H2B and H4 in vitro. In concert with CUL3 and RBX1, promotes the degradation of KAT5 thereby attenuating its ability to acetylate and activate ATM. Can elicit oncogenic or tumor suppressor activities depending on the tissue or cell type. The polypeptide is Cyclic AMP-dependent transcription factor ATF-2 (ATF2) (Homo sapiens (Human)).